Reading from the N-terminus, the 410-residue chain is MGDKGTRVFKKASPNGKLTVYLGKRDFVDHIDLVDPVDGVVLVDPEYLKERRVYVTLTCAFRYGREDLDVLGLTFRKDLFVANVQSFPPAPEDKKPLTRLQERLIKKLGEHAYPFTFEIPPNLPCSVTLQPGPEDTGKACGVDYEVKAFCAENLEEKIHKRNSVRLVIRKVQYAPERPGPQPTAETTRQFLMSDKPLHLEASLDKEIYYHGEPISVNVHVTNNTNKTVKKIKISVRQYADICLFNTAQYKCPVAMEEADDTVAPSSTFCKVYTLTPFLANNREKRGLALDGKLKHEDTNLASSTLLREGANREILGIIVSYKVKVKLVVSRGGDVAVELPFTLMHPKPKEEPLHREVPENQTPVDTNLIELDTNDDDIVFEDFARQRLKGMKDDKEEEENGTGSPQLNNR.

Residues 1–163 (MGDKGTRVFK…LEEKIHKRNS (163 aa)) form an interaction with SRC region. Positions 45-86 (PEYLKERRVYVTLTCAFRYGREDLDVLGLTFRKDLFVANVQS) are interaction with CHRM2. Tyr-47 is subject to Phosphotyrosine. Residues Lys-250, Met-255, Lys-324, and Lys-326 each coordinate 1D-myo-inositol hexakisphosphate. Positions 318–410 (IVSYKVKVKL…GTGSPQLNNR (93 aa)) are interaction with TRAF6. The [DE]-X(1,2)-F-X-X-[FL]-X-X-X-R motif signature appears at 385–395 (RQRLKGMKDDK). Residues 389 to 410 (KGMKDDKEEEENGTGSPQLNNR) are disordered. The span at 401-410 (GTGSPQLNNR) shows a compositional bias: polar residues. Residue Ser-404 is modified to Phosphoserine; by GRK5.

The protein belongs to the arrestin family. In terms of assembly, monomer. Homodimer. Homooligomer; the self-association is mediated by InsP6-binding. Heterooligomer with ARRB2; the association is mediated by InsP6-binding. Interacts with ADRB2 (phosphorylated). Interacts with CHRM2 (phosphorylated). Interacts with LHCGR. Interacts with CYTH2 and CASR. Interacts with AP2B1 (dephosphorylated); phosphorylation of AP2B1 disrupts the interaction. Interacts (dephosphorylated at Ser-404) with CLTC. Interacts with CCR2 and GRK2. Interacts with CRR5. Interacts with PTAFR (phosphorylated on serine residues). Interacts with CLTC and MAP2K3. Interacts with CREB1. Interacts with TRAF6. Interacts with IGF1R and MDM2. Interacts with C5AR1. Interacts with PDE4D. Interacts with SRC (via the SH3 domain and the protein kinase domain); the interaction is independent of the phosphorylation state of SRC C-terminus. Interacts with TACR1. Interacts with RAF1. Interacts with CHUK, IKBKB and MAP3K14. Interacts with DVL1; the interaction is enhanced by phosphorylation of DVL1. Interacts with DVL2; the interaction is enhanced by phosphorylation of DVL2. Interacts with IGF1R. Associates with MAP kinase p38. Part of a MAPK signaling complex consisting of TACR1, ARRB1, SRC, MAPK1 (activated) and MAPK3 (activated). Part of a MAPK signaling complex consisting of F2RL1, ARRB1, RAF1, MAPK1 (activated) and MAPK3 (activated). Interacts with GPR143. Interacts with MAP2K4/MKK4. Interacts with HCK and CXCR1 (phosphorylated). Interacts with ACKR3 and ACKR4. Interacts with ARRDC1; the interaction is direct. Interacts with GPR61, GPR62 and GPR135. Constitutively phosphorylated at in the cytoplasm. At the plasma membrane, is rapidly dephosphorylated, a process that is required for clathrin binding and ADRB2 endocytosis but not for ADRB2 binding and desensitization. Once internalized, is rephosphorylated. Post-translationally, the ubiquitination status appears to regulate the formation and trafficking of beta-arrestin-GPCR complexes and signaling. Ubiquitination appears to occur GPCR-specific. Ubiquitinated by MDM2; the ubiquitination is required for rapid internalization of ADRB2. Deubiquitinated by USP33; the deubiquitination leads to a dissociation of the beta-arrestin-GPCR complex. Stimulation of a class A GPCR, such as ADRB2, induces transient ubiquitination and subsequently promotes association with USP33.

Its subcellular location is the cytoplasm. The protein resides in the nucleus. It localises to the cell membrane. The protein localises to the membrane. It is found in the clathrin-coated pit. Its subcellular location is the cell projection. The protein resides in the pseudopodium. It localises to the cytoplasmic vesicle. In terms of biological role, functions in regulating agonist-mediated G-protein coupled receptor (GPCR) signaling by mediating both receptor desensitization and resensitization processes. During homologous desensitization, beta-arrestins bind to the GPRK-phosphorylated receptor and sterically preclude its coupling to the cognate G-protein; the binding appears to require additional receptor determinants exposed only in the active receptor conformation. The beta-arrestins target many receptors for internalization by acting as endocytic adapters (CLASPs, clathrin-associated sorting proteins) and recruiting the GPRCs to the adapter protein 2 complex 2 (AP-2) in clathrin-coated pits (CCPs). However, the extent of beta-arrestin involvement appears to vary significantly depending on the receptor, agonist and cell type. Internalized arrestin-receptor complexes traffic to intracellular endosomes, where they remain uncoupled from G-proteins. Two different modes of arrestin-mediated internalization occur. Class A receptors, like ADRB2, OPRM1, ENDRA, D1AR and ADRA1B dissociate from beta-arrestin at or near the plasma membrane and undergo rapid recycling. Class B receptors, like AVPR2, AGTR1, NTSR1, TRHR and TACR1 internalize as a complex with arrestin and traffic with it to endosomal vesicles, presumably as desensitized receptors, for extended periods of time. Receptor resensitization then requires that receptor-bound arrestin is removed so that the receptor can be dephosphorylated and returned to the plasma membrane. Involved in internalization of P2RY4 and UTP-stimulated internalization of P2RY2. Involved in phosphorylation-dependent internalization of OPRD1 ands subsequent recycling. Involved in the degradation of cAMP by recruiting cAMP phosphodiesterases to ligand-activated receptors. Beta-arrestins function as multivalent adapter proteins that can switch the GPCR from a G-protein signaling mode that transmits short-lived signals from the plasma membrane via small molecule second messengers and ion channels to a beta-arrestin signaling mode that transmits a distinct set of signals that are initiated as the receptor internalizes and transits the intracellular compartment. Acts as a signaling scaffold for MAPK pathways such as MAPK1/3 (ERK1/2). ERK1/2 activated by the beta-arrestin scaffold is largely excluded from the nucleus and confined to cytoplasmic locations such as endocytic vesicles, also called beta-arrestin signalosomes. Recruits c-Src/SRC to ADRB2 resulting in ERK activation. GPCRs for which the beta-arrestin-mediated signaling relies on both ARRB1 and ARRB2 (codependent regulation) include ADRB2, F2RL1 and PTH1R. For some GPCRs the beta-arrestin-mediated signaling relies on either ARRB1 or ARRB2 and is inhibited by the other respective beta-arrestin form (reciprocal regulation). Inhibits ERK1/2 signaling in AGTR1- and AVPR2-mediated activation (reciprocal regulation). Is required for SP-stimulated endocytosis of NK1R and recruits c-Src/SRC to internalized NK1R resulting in ERK1/2 activation, which is required for the antiapoptotic effects of SP. Is involved in proteinase-activated F2RL1-mediated ERK activity. Acts as a signaling scaffold for the AKT1 pathway. Is involved in alpha-thrombin-stimulated AKT1 signaling. Is involved in IGF1-stimulated AKT1 signaling leading to increased protection from apoptosis. Involved in activation of the p38 MAPK signaling pathway and in actin bundle formation. Involved in F2RL1-mediated cytoskeletal rearrangement and chemotaxis. Involved in AGTR1-mediated stress fiber formation by acting together with GNAQ to activate RHOA. Appears to function as signaling scaffold involved in regulation of MIP-1-beta-stimulated CCR5-dependent chemotaxis. Involved in attenuation of NF-kappa-B-dependent transcription in response to GPCR or cytokine stimulation by interacting with and stabilizing CHUK. May serve as nuclear messenger for GPCRs. Involved in OPRD1-stimulated transcriptional regulation by translocating to CDKN1B and FOS promoter regions and recruiting EP300 resulting in acetylation of histone H4. Involved in regulation of LEF1 transcriptional activity via interaction with DVL1 and/or DVL2 Also involved in regulation of receptors other than GPCRs. Involved in Toll-like receptor and IL-1 receptor signaling through the interaction with TRAF6 which prevents TRAF6 autoubiquitination and oligomerization required for activation of NF-kappa-B and JUN. Involved in IL8-mediated granule release in neutrophils. Binds phosphoinositides. Binds inositolhexakisphosphate (InsP6). Required for atypical chemokine receptor ACKR2-induced RAC1-LIMK1-PAK1-dependent phosphorylation of cofilin (CFL1) and for the up-regulation of ACKR2 from endosomal compartment to cell membrane, increasing its efficiency in chemokine uptake and degradation. Involved in the internalization of the atypical chemokine receptor ACKR3. Negatively regulates the NOTCH signaling pathway by mediating the ubiquitination and degradation of NOTCH1 by ITCH. Participates in the recruitment of the ubiquitin-protein ligase to the receptor. This is Beta-arrestin-1 (ARRB1) from Macaca fascicularis (Crab-eating macaque).